The chain runs to 467 residues: MMESYDVIVIGAGPGGYNAAIRAGQLGLKVACVEGRETLGGTCLNVGCMPSKALLHASELYAAASGGEFARLGIRVSPELDLAQMMKQKDESVAALTRGVEFLFRKHKVQWIKGWARLQGEGRVGVALADGGHAQLEARDIVIATGSEPAPLPGVPVDNQRILDSTGALELVEVPRHLVVIGAGVIGLELGSVWRRLGAQVTVLEYLERICPGLDGETARTLQRALTRQGMRFRLGTRVVAARSGEQGVELDLQPAAGGATESLQADYVLVAIGRRPYTEGLGLETVGLASDRRGMLENQGQRSAAPGVWVIGDVTSGPMLAHKAEEEAIVCIERIAGHAAEMNAEVIPSVIYTQPEVASVGLGEEQLQAARREYKVGRFPFSANSRAKINHESEGFIKILSDARSDQVLGVHMIGPGVSEMIGEACVAMEFSASAEDLALTCHPHPTRSEALRQAAMDVHGRAMQN.

FAD-binding positions include 34 to 43 (EGRETLGGTC), lysine 52, and alanine 116. Residues cysteine 43 and cysteine 48 are joined by a disulfide bond. Residues 182–186 (GAGVI), glutamate 205, valine 239, and 272–275 (AIGR) each bind NAD(+). Aspartate 314 and alanine 322 together coordinate FAD. Histidine 446 serves as the catalytic Proton acceptor.

Belongs to the class-I pyridine nucleotide-disulfide oxidoreductase family. Homodimer. Requires FAD as cofactor.

Its subcellular location is the cytoplasm. It catalyses the reaction N(6)-[(R)-dihydrolipoyl]-L-lysyl-[protein] + NAD(+) = N(6)-[(R)-lipoyl]-L-lysyl-[protein] + NADH + H(+). LPD-3 may substitute for lipoamide dehydrogenase of the 2-oxoglutarate dehydrogenase and pyruvate multienzyme complexes when the latter is inactive or missing. This is Dihydrolipoyl dehydrogenase 3 (lpd3) from Pseudomonas aeruginosa (strain ATCC 15692 / DSM 22644 / CIP 104116 / JCM 14847 / LMG 12228 / 1C / PRS 101 / PAO1).